The chain runs to 170 residues: Ribosome maturation factor RimM (170 aa).

The 74-residue stretch at 95-168 folds into the PRC barrel domain; sequence EDAYYYHEIV…IIKVQLMEGM (74 aa).

Belongs to the RimM family. In terms of assembly, binds ribosomal protein uS19.

The protein localises to the cytoplasm. Its function is as follows. An accessory protein needed during the final step in the assembly of 30S ribosomal subunit, possibly for assembly of the head region. Essential for efficient processing of 16S rRNA. May be needed both before and after RbfA during the maturation of 16S rRNA. It has affinity for free ribosomal 30S subunits but not for 70S ribosomes. The chain is Ribosome maturation factor RimM from Oceanobacillus iheyensis (strain DSM 14371 / CIP 107618 / JCM 11309 / KCTC 3954 / HTE831).